A 60-amino-acid polypeptide reads, in one-letter code: uncharacterized protein (60 aa).

This is an uncharacterized protein from Dictyostelium discoideum (Social amoeba).